Reading from the N-terminus, the 169-residue chain is Der GTPase-activating protein YihI (169 aa).

Disordered stretches follow at residues 1–92 (MKPS…EKPM) and 146–169 (SYDD…LRGN). Residues 10–19 (SKGHAKARRK) are compositionally biased toward basic residues. Over residues 20 to 30 (TREELDQEARD) the composition is skewed to basic and acidic residues. Positions 31 to 40 (RKRQKKRRGH) are enriched in basic residues. The segment covering 49–58 (GNTTSGSKGQ) has biased composition (polar residues). Over residues 147–159 (YDDDEEEEEDEKQ) the composition is skewed to acidic residues. Residues 160 to 169 (EDMMRLLRGN) show a composition bias toward basic and acidic residues.

It belongs to the YihI family. In terms of assembly, interacts with Der.

Its function is as follows. A GTPase-activating protein (GAP) that modifies Der/EngA GTPase function. May play a role in ribosome biogenesis. This Escherichia coli O1:K1 / APEC protein is Der GTPase-activating protein YihI.